The following is a 252-amino-acid chain: Putative pinene synthase (252 aa).

This sequence belongs to the terpene synthase family. Tpsa subfamily.

This Fragaria ananassa (Strawberry) protein is Putative pinene synthase.